Reading from the N-terminus, the 848-residue chain is DIS3-like exonuclease 2 (848 aa).

Positions 153–173 (KGDRNSGKTDNNSPNKTEKRC) are disordered. Positions 345 and 354 each coordinate Mg(2+).

The protein belongs to the RNR ribonuclease family. DIS3L2 subfamily. The cofactor is Mg(2+). It depends on Mn(2+) as a cofactor. Post-translationally, cleaved by caspase ced-3 in vitro.

Its subcellular location is the cytoplasm. The protein localises to the P-body. Functionally, 3'-5'-exoribonuclease that specifically recognizes RNAs polyuridylated at their 3' end and mediates their degradation. Component of an exosome-independent RNA degradation pathway that mediates degradation of cytoplasmic mRNAs that have been deadenylated and subsequently uridylated at their 3'. This Caenorhabditis elegans protein is DIS3-like exonuclease 2.